Consider the following 308-residue polypeptide: tRNA pseudouridine synthase B (308 aa).

Residue aspartate 33 is the Nucleophile of the active site.

Belongs to the pseudouridine synthase TruB family. Type 1 subfamily.

It carries out the reaction uridine(55) in tRNA = pseudouridine(55) in tRNA. Its function is as follows. Responsible for synthesis of pseudouridine from uracil-55 in the psi GC loop of transfer RNAs. This Nitrosomonas europaea (strain ATCC 19718 / CIP 103999 / KCTC 2705 / NBRC 14298) protein is tRNA pseudouridine synthase B.